The sequence spans 244 residues: tRNA (guanine-N(1)-)-methyltransferase (244 aa).

Residues G111 and 130 to 135 (IGDYVL) each bind S-adenosyl-L-methionine.

This sequence belongs to the RNA methyltransferase TrmD family. Homodimer.

It is found in the cytoplasm. The enzyme catalyses guanosine(37) in tRNA + S-adenosyl-L-methionine = N(1)-methylguanosine(37) in tRNA + S-adenosyl-L-homocysteine + H(+). Functionally, specifically methylates guanosine-37 in various tRNAs. This Phytoplasma australiense protein is tRNA (guanine-N(1)-)-methyltransferase.